Reading from the N-terminus, the 269-residue chain is Alcohol dehydrogenase-related 31 kDa protein (269 aa).

11–34 (YVADCGGIALETCKVLMTKNIAKL) lines the NAD(+) pocket. S139 is a substrate binding site. Y152 (proton acceptor) is an active-site residue.

This sequence belongs to the short-chain dehydrogenases/reductases (SDR) family.

This is Alcohol dehydrogenase-related 31 kDa protein (Adhr) from Drosophila lebanonensis (Fruit fly).